Consider the following 130-residue polypeptide: Small ribosomal subunit protein uS8 (130 aa).

This sequence belongs to the universal ribosomal protein uS8 family. As to quaternary structure, part of the 30S ribosomal subunit. Contacts proteins S5 and S12.

Functionally, one of the primary rRNA binding proteins, it binds directly to 16S rRNA central domain where it helps coordinate assembly of the platform of the 30S subunit. The polypeptide is Small ribosomal subunit protein uS8 (Klebsiella pneumoniae subsp. pneumoniae (strain ATCC 700721 / MGH 78578)).